Consider the following 367-residue polypeptide: Peptidyl-prolyl cis-trans isomerase D (367 aa).

The PPIase cyclophilin-type domain occupies 7–171; it reads FFEVAIGGKT…QPVTIVDCGE (165 aa). 3 TPR repeats span residues 213 to 246, 264 to 297, and 302 to 335; these read IEKLKSIGTKLFKEGNAEGALKKYLKATTYLEDY, ISCYLNVALMALKVNQPKVAIKAATSALDDETVA, and AKALFRRGSGYAALKNETDALKDLNAALELEPAD.

It belongs to the cyclophilin-type PPIase family. PPIase D subfamily.

It is found in the cytoplasm. The enzyme catalyses [protein]-peptidylproline (omega=180) = [protein]-peptidylproline (omega=0). Functionally, PPIases accelerate the folding of proteins. It catalyzes the cis-trans isomerization of proline imidic peptide bonds in oligopeptides. This Yarrowia lipolytica (strain CLIB 122 / E 150) (Yeast) protein is Peptidyl-prolyl cis-trans isomerase D (CPR6).